The primary structure comprises 247 residues: UPF0273 protein PH0284 (247 aa).

The KaiC domain occupies 3-247 (RRVKTGIPGV…VLKRGKVLEL (245 aa)). An ATP-binding site is contributed by 30–37 (GGPGTGKT).

It belongs to the UPF0273 family.

This is UPF0273 protein PH0284 from Pyrococcus horikoshii (strain ATCC 700860 / DSM 12428 / JCM 9974 / NBRC 100139 / OT-3).